The chain runs to 325 residues: Prenytransferase adrG (325 aa).

The next 7 helical transmembrane spans lie at 47–67, 71–91, 117–137, 163–183, 189–209, 236–256, and 258–278; these read LVGV…AVLL, MLLS…DDLI, ALLL…FLPW, PQIT…SLGL, MTPT…IDVI, LLSY…GVLT, and LGLP…WVLL.

The protein belongs to the UbiA prenyltransferase family. It depends on Mg(2+) as a cofactor.

Its subcellular location is the membrane. It catalyses the reaction 3,5-dimethylorsellinate + (2E,6E)-farnesyl diphosphate = (3R)-3-farnesyl-6-hydroxy-2,3,5-trimethyl-4-oxocyclohexa-1,5-diene-1-carboxylate + diphosphate + H(+). It functions in the pathway secondary metabolite biosynthesis; terpenoid biosynthesis. Its function is as follows. Prenytransferase; part of the gene cluster that mediates the biosynthesis of andrastins, meroterpenoid compounds that exhibit inhibitory activity against ras farnesyltransferase, suggesting that they could be promising leads for antitumor agents. The first step of the pathway is the synthesis of 3,5-dimethylorsellinic acid (DMOA) by the polyketide synthase adrD via condensation of one acetyl-CoA starter unit with 3 malonyl-CoA units and 2 methylations. DMAO is then converted to farnesyl-DMAO by the prenyltransferase adrG. The methyltransferase adrK catalyzes the methylation of the carboxyl group of farnesyl-DMAO to farnesyl-DMAO methyl ester which is further converted to epoxyfarnesyl-DMAO methyl ester by the FAD-dependent monooxygenase adrH. The terpene cyclase adrI then catalyzes the carbon skeletal rearrangement to generate the andrastin E, the first compound in the pathway having the andrastin scaffold, with the tetracyclic ring system. The post-cyclization tailoring enzymes adrF, adrE, adrJ, and adrA, are involved in the conversion of andrastin E into andrastin A. The short chain dehydrogenase adrF is responsible for the oxidation of the C-3 a hydroxyl group of andrastin E to yield the corresponding ketone, andrastin D. The ketoreductase adrE stereoselectively reduces the carbonyl moiety to reverse the stereochemistry of the C-3 position to yield andrastin F. The acetyltransferase adrJ is the acetyltransferase that attaches the acetyl group to the C-3 hydroxyl group of andrastin F to yield andrastin C. Finally, the cytochrome P450 monooxygenase adrA catalyzes two sequential oxidation reactions of the C-23 methyl group, to generate the corresponding alcohol andrastin B, and aldehyde andrastin A. The polypeptide is Prenytransferase adrG (Penicillium rubens (strain ATCC 28089 / DSM 1075 / NRRL 1951 / Wisconsin 54-1255) (Penicillium chrysogenum)).